A 497-amino-acid chain; its full sequence is Aldehyde dehydrogenase (497 aa).

Residue 242-247 (GSTLVG) coordinates NAD(+). Catalysis depends on E265, which acts as the Proton acceptor. The active-site Nucleophile is C299.

This sequence belongs to the aldehyde dehydrogenase family.

The catalysed reaction is an aldehyde + NAD(+) + H2O = a carboxylate + NADH + 2 H(+). It functions in the pathway alcohol metabolism; ethanol degradation; acetate from ethanol: step 2/2. This is Aldehyde dehydrogenase (aldA) from Aspergillus niger.